Consider the following 292-residue polypeptide: E3 ubiquitin-protein ligase trim-21 (292 aa).

Residues 6 to 52 form an RING-type zinc finger; it reads CEICDDDFSSEEDGDHNPRNLKCSHTLCEGCIKKLLKNGRVVCPFCR. The segment at 90 to 137 adopts a B box-type zinc-finger fold; that stretch reads NFPPKCVEHPYNVAEFACIESNCSSKNKLMCQTCEEFGAHKGHAKELL. The Zn(2+) site is built by cysteine 95, histidine 98, cysteine 123, and histidine 129. Residues 152-179 are a coiled coil; that stretch reads INQLKLNIQNCTVKKNELEEAVVKSEQL.

The protein belongs to the TRIM/RBCC family. Interacts with E2 ubiquitin-conjugating enzyme ubc-21. Interacts with ced-6; this mediates interaction of trim-21 with ced-1 and is required for ced-1 ubiquitination. Interacts with nck-1; the interaction is required for ced-1 ubiquitination. As to expression, in early larva, observed mainly in pharyngeal and body wall muscle cells.

Its subcellular location is the cytoplasm. It catalyses the reaction S-ubiquitinyl-[E2 ubiquitin-conjugating enzyme]-L-cysteine + [acceptor protein]-L-lysine = [E2 ubiquitin-conjugating enzyme]-L-cysteine + N(6)-ubiquitinyl-[acceptor protein]-L-lysine.. Its pathway is protein modification; protein ubiquitination. Its function is as follows. E3 ubiquitin-protein ligase which catalyzes 'Lys-48'-linked polyubiquitination of ced-1, promoting its proteasomal degradation to maintain appropriate ced-1 levels for apoptotic cell clearance. Acts together with E2 ubiquitin-conjugating enzyme ubc-21. The polypeptide is E3 ubiquitin-protein ligase trim-21 (Caenorhabditis elegans).